The sequence spans 166 residues: Gem-associated protein 6 (166 aa).

Residues 4–73 (WMKKGPLEWQ…VQTVEIVNEG (70 aa)) form the Sm domain. The 99-residue stretch at 68-166 (EIVNEGDHSV…LIQGHLEASQ (99 aa)) folds into the AD domain. A phosphoserine mark is found at S94 and S165.

In terms of assembly, part of the core SMN complex that contains SMN1, GEMIN2/SIP1, DDX20/GEMIN3, GEMIN4, GEMIN5, GEMIN6, GEMIN7, GEMIN8 and STRAP/UNRIP. Part of the SMN-Sm complex that contains SMN1, GEMIN2/SIP1, DDX20/GEMIN3, GEMIN4, GEMIN5, GEMIN6, GEMIN7, GEMIN8, STRAP/UNRIP and the Sm proteins SNRPB, SNRPD1, SNRPD2, SNRPD3, SNRPE, SNRPF and SNRPG. Interacts with GEMIN7; the interaction is direct. Interacts with GEMIN8; the interaction is direct. Interacts with SNRPB, SNRPD2, SNRPD3 and SNRPE; the interaction is direct.

The protein localises to the nucleus. It is found in the nucleoplasm. It localises to the gem. Its subcellular location is the cytoplasm. The SMN complex catalyzes the assembly of small nuclear ribonucleoproteins (snRNPs), the building blocks of the spliceosome, and thereby plays an important role in the splicing of cellular pre-mRNAs. Most spliceosomal snRNPs contain a common set of Sm proteins SNRPB, SNRPD1, SNRPD2, SNRPD3, SNRPE, SNRPF and SNRPG that assemble in a heptameric protein ring on the Sm site of the small nuclear RNA to form the core snRNP (Sm core). In the cytosol, the Sm proteins SNRPD1, SNRPD2, SNRPE, SNRPF and SNRPG are trapped in an inactive 6S pICln-Sm complex by the chaperone CLNS1A that controls the assembly of the core snRNP. To assemble core snRNPs, the SMN complex accepts the trapped 5Sm proteins from CLNS1A forming an intermediate. Binding of snRNA inside 5Sm triggers eviction of the SMN complex, thereby allowing binding of SNRPD3 and SNRPB to complete assembly of the core snRNP. In Bos taurus (Bovine), this protein is Gem-associated protein 6 (GEMIN6).